The following is a 64-amino-acid chain: MPKQKSHSGASKRFRITGSGKVVRQKANRRHLLEHKSSRRTRRLAGVEPLTKADAGRIKRLLAR.

2 stretches are compositionally biased toward basic residues: residues 1–15 (MPKQ…KRFR) and 23–43 (VRQK…RTRR). Positions 1–64 (MPKQKSHSGA…AGRIKRLLAR (64 aa)) are disordered.

The protein belongs to the bacterial ribosomal protein bL35 family.

This Frankia alni (strain DSM 45986 / CECT 9034 / ACN14a) protein is Large ribosomal subunit protein bL35.